Reading from the N-terminus, the 231-residue chain is Ribonuclease P protein component 3 (231 aa).

Belongs to the eukaryotic/archaeal RNase P protein component 3 family. Consists of a catalytic RNA component and at least 4-5 protein subunits.

Its subcellular location is the cytoplasm. It carries out the reaction Endonucleolytic cleavage of RNA, removing 5'-extranucleotides from tRNA precursor.. Part of ribonuclease P, a protein complex that generates mature tRNA molecules by cleaving their 5'-ends. The protein is Ribonuclease P protein component 3 of Methanococcus vannielii (strain ATCC 35089 / DSM 1224 / JCM 13029 / OCM 148 / SB).